A 289-amino-acid polypeptide reads, in one-letter code: uncharacterized protein (289 aa).

Residues 80-96 (PLNESRTSFKNIPQSRN) show a composition bias toward polar residues. 2 disordered regions span residues 80-101 (PLNE…PRDY) and 136-157 (PREN…RMRE).

This is an uncharacterized protein from Acanthamoeba polyphaga (Amoeba).